The sequence spans 744 residues: MLFPPLRSLFLFTLLLSSVCFLQIKADHDDESDLGSDIKVDKRLKFENPKLRQAYIALQSWKKAIFSDPFNFTANWNGSDVCSYNGIYCAPSPSYPKTRVVAGIDLNHADMAGYLASELGLLSDLALFHINSNRFCGEVPLTFNRMKLLYELDLSNNRFVGKFPKVVLSLPSLKFLDLRYNEFEGKIPSKLFDRELDAIFLNHNRFRFGIPKNMGNSPVSALVLADNNLGGCIPGSIGQMGKTLNELILSNDNLTGCLPPQIGNLKKVTVFDITSNRLQGPLPSSVGNMKSLEELHVANNAFTGVIPPSICQLSNLENFTYSSNYFSGRPPICAASLLADIVVNGTMNCITGLARQRSDKQCSSLLARPVDCSKFGCYNIFSPPPPTFKMSPEVRTLPPPIYVYSSPPPPPSSKMSPTVRAYSPPPPPSSKMSPSVRAYSPPPPPYSKMSPSVRAYPPPPPPSPSPPPPYVYSSPPPPYVYSSPPPPPYVYSSPPPPPYVYSSPPPPYVYSSPPPPYVYSSPPPPPPSPPPPCPESSPPPPVVYYAPVTQSPPPPSPVYYPPVTQSPPPPSPVYYPPVTNSPPPPSPVYYPPVTYSPPPPSPVYYPQVTPSPPPPSPLYYPPVTPSPPPPSPVYYPPVTPSPPPPSPVYYPPVTPSPPPPSPVYYPSETQSPPPPTEYYYSPSQSPPPTKACKEGHPPQATPSYEPPPEYSYSSSPPPPSPTSYFPPMPSVSYDASPPPPPSYY.

A signal peptide spans 1–26; that stretch reads MLFPPLRSLFLFTLLLSSVCFLQIKA. Residues Asn-71 and Asn-77 are each glycosylated (N-linked (GlcNAc...) asparagine). LRR repeat units lie at residues 122–145, 147–170, 171–194, 196–217, 219–240, 241–265, 266–289, 290–313, and 315–336; these read LSDLALFHINSNRFCGEVPLTFNR, KLLYELDLSNNRFVGKFPKVVLSL, PSLKFLDLRYNEFEGKIPSKLFDR, LDAIFLNHNRFRFGIPKNMGNS, VSALVLADNNLGGCIPGSIGQM, GKTLNELILSNDNLTGCLPPQIGNL, KKVTVFDITSNRLQGPLPSSVGNM, KSLEELHVANNAFTGVIPPSICQL, and NLENFTYSSNYFSGRPPICAAS. Asn-253 is a glycosylation site (N-linked (GlcNAc...) asparagine). 2 N-linked (GlcNAc...) asparagine glycosylation sites follow: Asn-318 and Asn-344. One copy of the LRR 10 repeat lies at 381 to 404; that stretch reads FSPPPPTFKMSPEVRTLPPPIYVY. Residues 382-744 form a contains the Ser-Pro(4) repeats region; the sequence is SPPPPTFKMS…ASPPPPPSYY (363 aa). 4 disordered regions span residues 408-445, 518-537, 555-576, and 658-744; these read PPPPSSKMSPTVRAYSPPPPPSSKMSPSVRAYSPPPPP, VYSSPPPPPPSPPPPCPESS, PSPVYYPPVTQSPPPPSPVYYP, and PPPS…PSYY. Over residues 430–439 the composition is skewed to low complexity; that stretch reads SKMSPSVRAY. Positions 704 to 729 are enriched in pro residues; it reads YEPPPEYSYSSSPPPPSPTSYFPPMP.

Post-translationally, hydroxylated on proline residues in the S-P-P-P-P repeat. O-glycosylated on hydroxyprolines. As to expression, expressed in root hair cells (at protein level).

The protein localises to the secreted. The protein resides in the cell wall. In terms of biological role, modulates cell morphogenesis by regulating cell wall formation and assembly, and/or growth polarization. Together with LRX2, component of the extracellular mechanism regulating root hair morphogenesis and elongation. The polypeptide is Leucine-rich repeat extensin-like protein 1 (LRX1) (Arabidopsis thaliana (Mouse-ear cress)).